A 248-amino-acid polypeptide reads, in one-letter code: tRNA (guanine-N(1)-)-methyltransferase (248 aa).

Residues Gly113 and 133-138 contribute to the S-adenosyl-L-methionine site; that span reads VGDYVL.

The protein belongs to the RNA methyltransferase TrmD family. In terms of assembly, homodimer.

It is found in the cytoplasm. The enzyme catalyses guanosine(37) in tRNA + S-adenosyl-L-methionine = N(1)-methylguanosine(37) in tRNA + S-adenosyl-L-homocysteine + H(+). Specifically methylates guanosine-37 in various tRNAs. The sequence is that of tRNA (guanine-N(1)-)-methyltransferase from Shewanella sp. (strain ANA-3).